A 144-amino-acid chain; its full sequence is Ribonuclease VapC1 (144 aa).

The PINc domain maps to 6–132 (VFVDGNVIVD…SFYSPDIEVL (127 aa)). Mg(2+) contacts are provided by aspartate 9 and aspartate 102.

It belongs to the PINc/VapC protein family. Requires Mg(2+) as cofactor.

Functionally, toxic component of a type II toxin-antitoxin (TA) system. An RNase. This Aquifex aeolicus (strain VF5) protein is Ribonuclease VapC1.